Reading from the N-terminus, the 308-residue chain is MSVTIEDIIKDLELEVINKGKNVNEINVSDINRPGLQFSGFYNYYANERVQIVGKAEWSFLDAMQPDLRKKRLEKYFEFDNPGTIVTRGLIPHKEFLESAIKNKRWILRTNNISTRFINRLMNYLDVKLAPETRLHGVLMDVYGIGILITGESGIGKSETALELIKRGHRLVADDAVDVKQIDGVLNGTSPYITSGMIEVRGMGIIDISALYGLSSVLKTKNIGLVICLEQWKKDENYDRLGIDKEYMDILNVPVRKLKIPIRPGRNLAVIIEAAAANYRYSLVSDVTPVDVISERIQELRKEDGGDE.

Active-site residues include His136 and Lys157. ATP is bound at residue 151–158 (GESGIGKS). Ser158 is a Mg(2+) binding site. Asp175 acts as the Proton acceptor; for phosphorylation activity. Proton donor; for dephosphorylation activity in catalysis. Positions 198–207 (IEVRGMGIID) are important for the catalytic mechanism of both phosphorylation and dephosphorylation. Residue Glu199 participates in Mg(2+) binding. Arg240 is an active-site residue. The tract at residues 261–266 (PIRPGR) is important for the catalytic mechanism of dephosphorylation.

This sequence belongs to the HPrK/P family. In terms of assembly, homohexamer. Mg(2+) serves as cofactor.

The enzyme catalyses [HPr protein]-L-serine + ATP = [HPr protein]-O-phospho-L-serine + ADP + H(+). It carries out the reaction [HPr protein]-O-phospho-L-serine + phosphate + H(+) = [HPr protein]-L-serine + diphosphate. In terms of biological role, catalyzes the ATP- as well as the pyrophosphate-dependent phosphorylation of a specific serine residue in HPr, a phosphocarrier protein of the phosphoenolpyruvate-dependent sugar phosphotransferase system (PTS). HprK/P also catalyzes the pyrophosphate-producing, inorganic phosphate-dependent dephosphorylation (phosphorolysis) of seryl-phosphorylated HPr (P-Ser-HPr). The two antagonistic activities of HprK/P are regulated by several intracellular metabolites, which change their concentration in response to the absence or presence of rapidly metabolisable carbon sources (glucose, fructose, etc.) in the growth medium. Therefore, by controlling the phosphorylation state of HPr, HPrK/P is a sensor enzyme that plays a major role in the regulation of carbon metabolism and sugar transport: it mediates carbon catabolite repression (CCR), and regulates PTS-catalyzed carbohydrate uptake and inducer exclusion. The protein is HPr kinase/phosphorylase of Clostridium kluyveri (strain NBRC 12016).